The primary structure comprises 391 residues: 8-amino-7-oxononanoate synthase 1 (391 aa).

Residue 108 to 109 (GF) participates in pyridoxal 5'-phosphate binding. His133 is a substrate binding site. Pyridoxal 5'-phosphate contacts are provided by residues Ser180, 205 to 208 (DDAH), and 236 to 239 (TLSK). Lys239 bears the N6-(pyridoxal phosphate)lysine mark. Thr353 lines the substrate pocket.

It belongs to the class-II pyridoxal-phosphate-dependent aminotransferase family. BioF subfamily. As to quaternary structure, homodimer. Requires pyridoxal 5'-phosphate as cofactor.

The catalysed reaction is 6-carboxyhexanoyl-[ACP] + L-alanine + H(+) = (8S)-8-amino-7-oxononanoate + holo-[ACP] + CO2. It functions in the pathway cofactor biosynthesis; biotin biosynthesis. In terms of biological role, catalyzes the decarboxylative condensation of pimeloyl-[acyl-carrier protein] and L-alanine to produce 8-amino-7-oxononanoate (AON), [acyl-carrier protein], and carbon dioxide. The chain is 8-amino-7-oxononanoate synthase 1 from Bacillus velezensis (strain DSM 23117 / BGSC 10A6 / LMG 26770 / FZB42) (Bacillus amyloliquefaciens subsp. plantarum).